The chain runs to 586 residues: SPbeta prophage-derived uncharacterized protein YorA (586 aa).

PbH1 repeat units lie at residues 108–147 (AENV…HVHG), 148–170 (SKNV…WIAA), 184–206 (SKSV…ATNG), 207–235 (CEGL…DLEG), 246–268 (PYEL…TAHT), 288–313 (STDV…DSVG), 320–341 (GNRI…MIRG), 364–384 (AEDV…QIQV), 387–410 (SSDI…KVMD), 411–432 (SNDV…YCER), 435–456 (AVRI…YWDK), 481–504 (MYNI…HLIG), and 505–531 (GSEH…YLNG).

The protein is SPbeta prophage-derived uncharacterized protein YorA (yorA) of Bacillus subtilis (strain 168).